The primary structure comprises 155 residues: UPF0178 protein TDE_2151 (155 aa).

This sequence belongs to the UPF0178 family.

The polypeptide is UPF0178 protein TDE_2151 (Treponema denticola (strain ATCC 35405 / DSM 14222 / CIP 103919 / JCM 8153 / KCTC 15104)).